The primary structure comprises 103 residues: uncharacterized protein (103 aa).

Polar residues-rich tracts occupy residues 1–10 (MSNSCSTSSY) and 18–28 (TRSGSNVNRNY). The disordered stretch occupies residues 1 to 28 (MSNSCSTSSYPIRRKTPTRSGSNVNRNY).

This is an uncharacterized protein from Acanthamoeba polyphaga mimivirus (APMV).